The primary structure comprises 103 residues: Large ribosomal subunit protein bL21 (103 aa).

Belongs to the bacterial ribosomal protein bL21 family. As to quaternary structure, part of the 50S ribosomal subunit. Contacts protein L20.

This protein binds to 23S rRNA in the presence of protein L20. The polypeptide is Large ribosomal subunit protein bL21 (Tolumonas auensis (strain DSM 9187 / NBRC 110442 / TA 4)).